We begin with the raw amino-acid sequence, 479 residues long: Ribosomal RNA small subunit methyltransferase F (479 aa).

S-adenosyl-L-methionine-binding positions include A125–K131, E149, D176, and D194. Catalysis depends on C247, which acts as the Nucleophile.

This sequence belongs to the class I-like SAM-binding methyltransferase superfamily. RsmB/NOP family.

The protein localises to the cytoplasm. The catalysed reaction is cytidine(1407) in 16S rRNA + S-adenosyl-L-methionine = 5-methylcytidine(1407) in 16S rRNA + S-adenosyl-L-homocysteine + H(+). Its function is as follows. Specifically methylates the cytosine at position 1407 (m5C1407) of 16S rRNA. In Escherichia coli O157:H7 (strain EC4115 / EHEC), this protein is Ribosomal RNA small subunit methyltransferase F.